The sequence spans 139 residues: MAITYQTEGIKMPDIKKRETTEWIKAVAATYEKRIGEIAYIFCSDEKILEVNRQYLQHDYYTDIITFDYCEGNRLSGDLFISLETVKTNSEQFNTPYEEELHRTIIHGILHLCGINDKGPGEREIMEAAENKALAMRKQ.

Residues His-107, His-111, and Asp-117 each contribute to the Zn(2+) site.

Belongs to the endoribonuclease YbeY family. Zn(2+) serves as cofactor.

The protein localises to the cytoplasm. Its function is as follows. Single strand-specific metallo-endoribonuclease involved in late-stage 70S ribosome quality control and in maturation of the 3' terminus of the 16S rRNA. The polypeptide is Endoribonuclease YbeY (Bacteroides fragilis (strain ATCC 25285 / DSM 2151 / CCUG 4856 / JCM 11019 / LMG 10263 / NCTC 9343 / Onslow / VPI 2553 / EN-2)).